Here is a 464-residue protein sequence, read N- to C-terminus: GPI mannosyltransferase 2 (464 aa).

Over 1-70 (MYYIGHPSYY…MTRSGYNYFK (70 aa)) the chain is Cytoplasmic. Residues 71–91 (GICVCTFLLSTILYLGIAVIM) traverse the membrane as a helical segment. At 92–166 (SHLCVFDDTA…ISFLAFRSKD (75 aa)) the chain is on the lumenal side. Asparagine 108 and asparagine 139 each carry an N-linked (GlcNAc...) asparagine glycan. Residues 167–187 (VVLLGIVSCFASIFFHAIACY) form a helical membrane-spanning segment. Residues 188-219 (ALYLLTKSIFSNQKMTAYTVIFYCFSPSGIYM) are Cytoplasmic-facing. The chain crosses the membrane as a helical span at residues 220–240 (SVGYTESLFAAFSFLGLLLFI). The Lumenal portion of the chain corresponds to 241 to 260 (KKQQYPAAFLWSLATLIRSN). A helical transmembrane segment spans residues 261–281 (GIFWCIFFGMPAIGTLKISLE). The Cytoplasmic portion of the chain corresponds to 282-289 (RLQLTFMQ). A helical transmembrane segment spans residues 290-309 (VSQLVGYGTKCLIILVPFFY). The Lumenal portion of the chain corresponds to 310-356 (NQYLGFKLFCPGVAWCNKSLPLIYPAVQEKYWNVGFLRYWTLNNIPN). N-linked (GlcNAc...) asparagine glycosylation is present at asparagine 326. The helical transmembrane segment at 357-377 (FLFALLSIIPILFALFYSISG) threads the bilayer. Topologically, residues 378–388 (STLHSFRSIKS) are cytoplasmic. The helical transmembrane segment at 389–409 (HLVLSALYLYIGCFHMHTQVL) threads the bilayer. Residues 410–440 (NRMSSALPLLYWSMAHATLYAKSRNLKAFGH) are Lumenal-facing. Residues 441–461 (CILFVWIVYTVIQAGLYGSFL) form a helical membrane-spanning segment. At 462 to 464 (PPA) the chain is on the cytoplasmic side.

Belongs to the PIGV family. Part of the GPI mannosyltransferase 2 complex composed of gpi18 and C167.09.

The protein resides in the endoplasmic reticulum membrane. Its pathway is glycolipid biosynthesis; glycosylphosphatidylinositol-anchor biosynthesis. Mannosyltransferase involved in glycosylphosphatidylinositol-anchor biosynthesis. Responsible for the transfer of the second mannose to the glycosylphosphatidylinositol during GPI precursor assembly. The sequence is that of GPI mannosyltransferase 2 (gpi18) from Schizosaccharomyces pombe (strain 972 / ATCC 24843) (Fission yeast).